We begin with the raw amino-acid sequence, 307 residues long: Taste receptor type 2 member 41 (307 aa).

Residues 1–7 are Extracellular-facing; sequence MQAALMA. A helical membrane pass occupies residues 8 to 28; sequence FFMLLFSLLSLLGIAANGFIV. The Cytoplasmic portion of the chain corresponds to 29 to 40; it reads LVLGREWLRYGR. Residues 41-61 traverse the membrane as a helical segment; sequence LLPLDMILISLGASRXCLQLV. Residues 62 to 88 are Extracellular-facing; that stretch reads GTVHNFYYSARKVEYSGGLGRQFFHLH. A helical membrane pass occupies residues 89 to 109; it reads WHFLNSATFWFCSWLSVLFCV. Residues 110-129 lie on the Cytoplasmic side of the membrane; the sequence is KIANITHPTFLWLKWRFPGW. A helical transmembrane segment spans residues 130 to 150; it reads VPWLLLGSVLISFIITLLFFW. The Extracellular segment spans residues 151–183; it reads VNYPVYQELLIRKFSGNMTYKWNTRIETYYFPS. N167 carries N-linked (GlcNAc...) asparagine glycosylation. Residues 184 to 204 form a helical membrane-spanning segment; sequence LKLVIWSIPFSVFLVSIMLLI. Residues 205-234 are Cytoplasmic-facing; sequence NSLRRHTQRMQHNGHSLQDPSTQAHTRALK. A helical transmembrane segment spans residues 235–255; that stretch reads SLISFLFLYALSFLSLIIDAT. Residues 256–264 are Extracellular-facing; it reads KFISMQNDF. A helical membrane pass occupies residues 265 to 285; it reads YWPWQIAVYLCISVHPFILIF. Residues 286 to 307 are Cytoplasmic-facing; that stretch reads SNLKLRSMFWQVLLLARGFWVA.

It belongs to the G-protein coupled receptor T2R family.

It localises to the membrane. In terms of biological role, receptor that may play a role in the perception of bitterness and is gustducin-linked. May play a role in sensing the chemical composition of the gastrointestinal content. The activity of this receptor may stimulate alpha gustducin, mediate PLC-beta-2 activation and lead to the gating of TRPM5. This is Taste receptor type 2 member 41 (TAS2R41) from Gorilla gorilla gorilla (Western lowland gorilla).